Here is a 44-residue protein sequence, read N- to C-terminus: Photosystem II reaction center protein K (44 aa).

Positions methionine 1–alanine 7 are excised as a propeptide. Residues leucine 23–phenylalanine 43 traverse the membrane as a helical segment.

Belongs to the PsbK family. In terms of assembly, PSII is composed of 1 copy each of membrane proteins PsbA, PsbB, PsbC, PsbD, PsbE, PsbF, PsbH, PsbI, PsbJ, PsbK, PsbL, PsbM, PsbT, PsbX, PsbY, PsbZ, Psb30/Ycf12, at least 3 peripheral proteins of the oxygen-evolving complex and a large number of cofactors. It forms dimeric complexes.

It localises to the plastid. The protein localises to the chloroplast thylakoid membrane. One of the components of the core complex of photosystem II (PSII). PSII is a light-driven water:plastoquinone oxidoreductase that uses light energy to abstract electrons from H(2)O, generating O(2) and a proton gradient subsequently used for ATP formation. It consists of a core antenna complex that captures photons, and an electron transfer chain that converts photonic excitation into a charge separation. This Trieres chinensis (Marine centric diatom) protein is Photosystem II reaction center protein K.